The chain runs to 45 residues: Large ribosomal subunit protein bL34 (45 aa).

Residues 1 to 24 (MTKRTFGGTSRKRKRVSGFRVRMR) are disordered. Positions 10–24 (SRKRKRVSGFRVRMR) are enriched in basic residues.

Belongs to the bacterial ribosomal protein bL34 family.

This is Large ribosomal subunit protein bL34 from Prochlorococcus marinus (strain MIT 9303).